We begin with the raw amino-acid sequence, 252 residues long: tRNA (guanine-N(1)-)-methyltransferase (252 aa).

S-adenosyl-L-methionine-binding positions include Gly113 and 133 to 138 (IGDYVL).

Belongs to the RNA methyltransferase TrmD family. In terms of assembly, homodimer.

It localises to the cytoplasm. The catalysed reaction is guanosine(37) in tRNA + S-adenosyl-L-methionine = N(1)-methylguanosine(37) in tRNA + S-adenosyl-L-homocysteine + H(+). Its function is as follows. Specifically methylates guanosine-37 in various tRNAs. This chain is tRNA (guanine-N(1)-)-methyltransferase, found in Xanthomonas campestris pv. campestris (strain 8004).